The primary structure comprises 230 residues: Probable endonuclease C19F8.04c (230 aa).

The chain crosses the membrane as a helical span at residues Ala-10–Leu-27. In terms of domain architecture, TNase-like spans Lys-55–Gln-216. The active site involves Arg-104. Asp-109 provides a ligand contact to Ca(2+). Active-site residues include Glu-112 and Arg-152.

Belongs to the LCL3 family.

Its subcellular location is the mitochondrion. The protein resides in the membrane. The sequence is that of Probable endonuclease C19F8.04c from Schizosaccharomyces pombe (strain 972 / ATCC 24843) (Fission yeast).